A 627-amino-acid chain; its full sequence is Nuclear receptor subfamily 4 group A member 3 (627 aa).

The segment at M1–Q112 is activation function (AF)-1 domain. Residues M1–S139 form a required for DNA-PK heterotrimer region. The interval M1–T292 is interaction with NCOA1, NCOA2, NCOA3 and KAT2B. Disordered stretches follow at residues H96 to P162 and A268 to G289. Residues G97–Q112 show a composition bias toward basic residues. Over residues P141–P150 the composition is skewed to pro residues. Residues S269–S288 are compositionally biased toward low complexity. Positions E290–T365 form a DNA-binding region, nuclear receptor. NR C4-type zinc fingers lie at residues C293 to C313 and C329 to C353. Residues T365–P395 are disordered. Residues K378–S388 are compositionally biased toward low complexity. The tract at residues K380–F627 is interaction with KAT2B. An NR LBD domain is found at P395–T624.

This sequence belongs to the nuclear hormone receptor family. NR4 subfamily. Interacts with SIX3 (via homeobox); differentially regulates the transcriptional activities of NR4A3. Interacts with NCOA2; potentiates the activity of the NR4A3. Interacts with NCOA1, NCOA3, MED1 and KAT2B. Interacts with EP300 and NCOA2; mediates the recruitment of MED1 in the coactivator complex. Interacts with the constituents of DNA-PK heterotrimer PRKDC, XRCC6 and XRCC5; phosphorylates and prevents NR4A3 ubiquitinylation and degradation. Interacts with NR3C1 (via nuclear receptor DNA-binding domain); the interactions represses transcription activity of NR4A3 on the POMC promoter Nur response element (NurRE). Interacts with TRIM28; the interactions potentiates NR4A3 activity on NurRE promoter. Binds DNA as a monomer and homodimer. Interacts with PARP1; activates PARP1 by improving acetylation of PARP1 and suppressing the interaction between PARP1 and SIRT1. Phosphorylated by PRKDC. As to expression, ubiquitous. Highest levels of expression in brain. Widely expressed throughout the arcuate nucleus region of the hypothalamus, namely in AgRP neurons.

The protein resides in the nucleus. Functionally, transcriptional activator that binds to regulatory elements in promoter regions in a cell- and response element (target)-specific manner. Induces gene expression by binding as monomers to the NR4A1 response element (NBRE) 5'-AAAAGGTCA-3' site and as homodimers to the Nur response element (NurRE) site in the promoter of their regulated target genes. Plays a role in the regulation of proliferation, survival and differentiation of many different cell types and also in metabolism and inflammation. Mediates proliferation of vascular smooth muscle, myeloid progenitor cell and type B pancreatic cells; promotes mitogen-induced vascular smooth muscle cell proliferation through transactivation of SKP2 promoter by binding a NBRE site. Upon PDGF stimulation, stimulates vascular smooth muscle cell proliferation by regulating CCND1 and CCND2 expression. In islets, induces type B pancreatic cell proliferation through up-regulation of genes that activate cell cycle, as well as genes that cause degradation of the CDKN1A. Negatively regulates myeloid progenitor cell proliferation by repressing RUNX1 in a NBRE site-independent manner. During inner ear, plays a role as a key mediator of the proliferative growth phase of semicircular canal development. Also mediates survival of neuron and smooth muscle cells; mediates CREB-induced neuronal survival, and during hippocampus development, plays a critical role in pyramidal cell survival and axonal guidance. Is required for S phase entry of the cell cycle and survival of smooth muscle cells by inducing CCND1, resulting in RB1 phosphorylation. Binds to NBRE motif in CCND1 promoter, resulting in the activation of the promoter and CCND1 transcription. Also plays a role in inflammation; upon TNF stimulation, mediates monocyte adhesion by inducing the expression of VCAM1 and ICAM1 by binding to the NBRE consensus site. In mast cells activated by Fc-epsilon receptor cross-linking, promotes the synthesis and release of cytokines but impairs events leading to degranulation. Also plays a role in metabolism; by modulating feeding behavior; and by playing a role in energy balance by inhibiting the glucocorticoid-induced orexigenic neuropeptides AGRP expression, at least in part by forming a complex with activated NR3C1 on the AGRP- glucocorticoid response element (GRE), and thus weakening the DNA binding activity of NR3C1. Upon catecholamines stimulation, regulates gene expression that controls oxidative metabolism in skeletal muscle. Plays a role in glucose transport by regulating translocation of the SLC2A4 glucose transporter to the cell surface. Finally, during gastrulation plays a crucial role in the formation of anterior mesoderm by controlling cell migration. Inhibits adipogenesis. Also participates in cardiac hypertrophy by activating PARP1. The protein is Nuclear receptor subfamily 4 group A member 3 (Nr4a3) of Mus musculus (Mouse).